An 871-amino-acid chain; its full sequence is Alanine--tRNA ligase (871 aa).

Zn(2+) contacts are provided by His-561, His-565, Cys-665, and His-669.

It belongs to the class-II aminoacyl-tRNA synthetase family. The cofactor is Zn(2+).

It is found in the cytoplasm. The catalysed reaction is tRNA(Ala) + L-alanine + ATP = L-alanyl-tRNA(Ala) + AMP + diphosphate. In terms of biological role, catalyzes the attachment of alanine to tRNA(Ala) in a two-step reaction: alanine is first activated by ATP to form Ala-AMP and then transferred to the acceptor end of tRNA(Ala). Also edits incorrectly charged Ser-tRNA(Ala) and Gly-tRNA(Ala) via its editing domain. This is Alanine--tRNA ligase from Dehalococcoides mccartyi (strain CBDB1).